A 316-amino-acid chain; its full sequence is Petrobactin import system permease protein YclN (316 aa).

8 helical membrane passes run 5 to 25 (YLFI…VEDL), 49 to 69 (LISI…MQQI), 94 to 114 (LLLF…VFAL), 133 to 153 (IFIP…ATFI), 181 to 201 (LLYL…KFTL), 224 to 244 (LIIV…LPFL), 268 to 288 (VLLG…IIFP), and 290 to 310 (EISI…FMLL).

Belongs to the binding-protein-dependent transport system permease family. FecCD subfamily. In terms of assembly, the complex is composed of two ATP-binding proteins (YclP), two transmembrane proteins (YclN and YclO) and a solute-binding protein (YclQ).

The protein resides in the cell membrane. Part of the ABC transporter complex YclNOPQ involved in uptake of ferric-petrobactin. Petrobactin is a photoreactive 3,4-catecholate siderophore produced by many members of the B.cereus group, including B.anthracis. Probably responsible for the translocation of the substrate across the membrane. This Bacillus subtilis (strain 168) protein is Petrobactin import system permease protein YclN (yclN).